Consider the following 177-residue polypeptide: Peptidyl-tRNA hydrolase (177 aa).

Residue Tyr-18 coordinates tRNA. His-23 functions as the Proton acceptor in the catalytic mechanism. The tRNA site is built by Phe-65, Asn-67, and Asn-113.

This sequence belongs to the PTH family. As to quaternary structure, monomer.

Its subcellular location is the cytoplasm. The enzyme catalyses an N-acyl-L-alpha-aminoacyl-tRNA + H2O = an N-acyl-L-amino acid + a tRNA + H(+). Its function is as follows. Hydrolyzes ribosome-free peptidyl-tRNAs (with 1 or more amino acids incorporated), which drop off the ribosome during protein synthesis, or as a result of ribosome stalling. Catalyzes the release of premature peptidyl moieties from peptidyl-tRNA molecules trapped in stalled 50S ribosomal subunits, and thus maintains levels of free tRNAs and 50S ribosomes. The sequence is that of Peptidyl-tRNA hydrolase from Corynebacterium efficiens (strain DSM 44549 / YS-314 / AJ 12310 / JCM 11189 / NBRC 100395).